Reading from the N-terminus, the 231-residue chain is Orotidine 5'-phosphate decarboxylase (231 aa).

Residues Asp11, Lys33, 60–69, Thr120, Arg181, Gln190, Gly210, and Arg211 each bind substrate; that span reads DLKFHDIPNT. The active-site Proton donor is Lys62.

The protein belongs to the OMP decarboxylase family. Type 1 subfamily. In terms of assembly, homodimer.

The enzyme catalyses orotidine 5'-phosphate + H(+) = UMP + CO2. The protein operates within pyrimidine metabolism; UMP biosynthesis via de novo pathway; UMP from orotate: step 2/2. Functionally, catalyzes the decarboxylation of orotidine 5'-monophosphate (OMP) to uridine 5'-monophosphate (UMP). The protein is Orotidine 5'-phosphate decarboxylase of Vibrio cholerae serotype O1 (strain ATCC 39541 / Classical Ogawa 395 / O395).